The sequence spans 1456 residues: RNA replication protein (1456 aa).

The Alphavirus-like MT domain occupies 59–224 (NPYSIELHTH…HHEFTDLQWL (166 aa)). 3 disordered regions span residues 474 to 499 (DLAGMRGNNQEETSTAPREPEGEKKE), 513 to 563 (RKHN…DLPG), and 581 to 600 (QKWEDASSTDSSTIDPTEII). Polar residues predominate over residues 480 to 489 (GNNQEETSTA). The span at 513 to 528 (RKHNRETRSRAAKKAK) shows a compositional bias: basic residues. The span at 529–547 (RLAEIQDSMNRDRTEEGSH) shows a compositional bias: basic and acidic residues. A compositionally biased stretch (polar residues) spans 586–595 (ASSTDSSTID). A (+)RNA virus helicase ATP-binding domain is found at 695 to 862 (DVKNKRIGAI…VFAKYCRYYL (168 aa)). 735 to 742 (GAGGSGKS) contacts ATP. The (+)RNA virus helicase C-terminal domain occupies 863–997 (NATHRNKKDL…VVREHALKEY (135 aa)). In terms of domain architecture, RdRp catalytic spans 1236 to 1343 (RPSLANDYTA…DCVPEVKQSF (108 aa)).

The protein belongs to the potexvirus/carlavirus RNA replication protein family.

The enzyme catalyses RNA(n) + a ribonucleoside 5'-triphosphate = RNA(n+1) + diphosphate. The catalysed reaction is ATP + H2O = ADP + phosphate + H(+). In terms of biological role, RNA replication. The central part of this protein possibly functions as an ATP-binding helicase. The protein is RNA replication protein of Brassica campestris (Field mustard).